Here is a 157-residue protein sequence, read N- to C-terminus: Ribosome maturation factor RimP (157 aa).

Belongs to the RimP family.

Its subcellular location is the cytoplasm. In terms of biological role, required for maturation of 30S ribosomal subunits. The polypeptide is Ribosome maturation factor RimP (Ligilactobacillus salivarius (strain UCC118) (Lactobacillus salivarius)).